Reading from the N-terminus, the 297-residue chain is Ribosomal RNA small subunit methyltransferase H (297 aa).

S-adenosyl-L-methionine is bound by residues 30-32, D48, F75, D96, and Q103; that span reads GGY.

It belongs to the methyltransferase superfamily. RsmH family.

It localises to the cytoplasm. It catalyses the reaction cytidine(1402) in 16S rRNA + S-adenosyl-L-methionine = N(4)-methylcytidine(1402) in 16S rRNA + S-adenosyl-L-homocysteine + H(+). Functionally, specifically methylates the N4 position of cytidine in position 1402 (C1402) of 16S rRNA. This chain is Ribosomal RNA small subunit methyltransferase H, found in Ehrlichia canis (strain Jake).